We begin with the raw amino-acid sequence, 297 residues long: 4-hydroxy-tetrahydrodipicolinate synthase (297 aa).

Thr46 contributes to the pyruvate binding site. Catalysis depends on Tyr134, which acts as the Proton donor/acceptor. Residue Lys162 is the Schiff-base intermediate with substrate of the active site. A pyruvate-binding site is contributed by Ile204.

It belongs to the DapA family. Homotetramer; dimer of dimers.

The protein localises to the cytoplasm. The enzyme catalyses L-aspartate 4-semialdehyde + pyruvate = (2S,4S)-4-hydroxy-2,3,4,5-tetrahydrodipicolinate + H2O + H(+). It participates in amino-acid biosynthesis; L-lysine biosynthesis via DAP pathway; (S)-tetrahydrodipicolinate from L-aspartate: step 3/4. Its function is as follows. Catalyzes the condensation of (S)-aspartate-beta-semialdehyde [(S)-ASA] and pyruvate to 4-hydroxy-tetrahydrodipicolinate (HTPA). The protein is 4-hydroxy-tetrahydrodipicolinate synthase of Stenotrophomonas maltophilia (strain R551-3).